Here is a 341-residue protein sequence, read N- to C-terminus: Tubulin-specific chaperone C (341 aa).

M1 is modified (N-acetylmethionine). Residues 34–49 (ERQIEVERRKQKRQDQ) show a composition bias toward basic and acidic residues. Residues 34–55 (ERQIEVERRKQKRQDQEVEEEK) form a disordered region. S79 is modified (phosphoserine). Residues 148 to 173 (TAQVDAAPVTSAAPSPPVTKEEEGAP) are disordered. In terms of domain architecture, C-CAP/cofactor C-like spans 163 to 318 (PPVTKEEEGA…NWDQVDDFNW (156 aa)).

It belongs to the TBCC family. As to quaternary structure, supercomplex made of cofactors A to E. Cofactors A and D function by capturing and stabilizing tubulin in a quasi-native conformation. Cofactor E binds to the cofactor D-tubulin complex; interaction with cofactor C then causes the release of tubulin polypeptides that are committed to the native state.

It localises to the cytoplasm. Its function is as follows. Tubulin-folding protein; involved in the final step of the tubulin folding pathway. The protein is Tubulin-specific chaperone C (Tbcc) of Mus musculus (Mouse).